Reading from the N-terminus, the 256-residue chain is Glutamate racemase (256 aa).

Substrate-binding positions include 11 to 12 and 43 to 44; these read DS and YG. Cys74 (proton donor/acceptor) is an active-site residue. Substrate is bound at residue 75–76; sequence NT. Catalysis depends on Cys182, which acts as the Proton donor/acceptor. 183–184 lines the substrate pocket; the sequence is TH.

It belongs to the aspartate/glutamate racemases family.

It catalyses the reaction L-glutamate = D-glutamate. The protein operates within cell wall biogenesis; peptidoglycan biosynthesis. Functionally, provides the (R)-glutamate required for cell wall biosynthesis. This chain is Glutamate racemase, found in Leptospira interrogans serogroup Icterohaemorrhagiae serovar Lai (strain 56601).